The chain runs to 466 residues: Histidine--tRNA ligase (466 aa).

Belongs to the class-II aminoacyl-tRNA synthetase family. In terms of assembly, homodimer.

The protein localises to the cytoplasm. It catalyses the reaction tRNA(His) + L-histidine + ATP = L-histidyl-tRNA(His) + AMP + diphosphate + H(+). The polypeptide is Histidine--tRNA ligase (Bifidobacterium animalis subsp. lactis (strain AD011)).